The chain runs to 259 residues: 1,2-dihydroxy-1,2-dihydronaphthalene dehydrogenase (259 aa).

Residues 8-35 and Asp58 contribute to the NAD(+) site; that span reads AITG…SALV. Ser140 is a substrate binding site. Tyr153 acts as the Proton acceptor in catalysis. Lys157 provides a ligand contact to NAD(+).

The protein belongs to the short-chain dehydrogenases/reductases (SDR) family.

It catalyses the reaction (1R,2S)-1,2-dihydronaphthalene-1,2-diol + NAD(+) = naphthalene-1,2-diol + NADH + H(+). The protein operates within aromatic compound metabolism; naphthalene degradation. Its function is as follows. Catalyzes the oxidation of naphthalene dihydrodiol into 1,2-dihydroxynaphthalene. The sequence is that of 1,2-dihydroxy-1,2-dihydronaphthalene dehydrogenase from Ralstonia sp.